The following is a 101-amino-acid chain: NADH-quinone oxidoreductase subunit K (101 aa).

Helical transmembrane passes span 4–24 (LGHL…GIFL), 30–50 (IVLL…FIAF), and 62–82 (FVFF…AILV).

The protein belongs to the complex I subunit 4L family. NDH-1 is composed of 14 different subunits. Subunits NuoA, H, J, K, L, M, N constitute the membrane sector of the complex.

The protein resides in the cell inner membrane. It carries out the reaction a quinone + NADH + 5 H(+)(in) = a quinol + NAD(+) + 4 H(+)(out). Functionally, NDH-1 shuttles electrons from NADH, via FMN and iron-sulfur (Fe-S) centers, to quinones in the respiratory chain. The immediate electron acceptor for the enzyme in this species is believed to be ubiquinone. Couples the redox reaction to proton translocation (for every two electrons transferred, four hydrogen ions are translocated across the cytoplasmic membrane), and thus conserves the redox energy in a proton gradient. The protein is NADH-quinone oxidoreductase subunit K of Xylella fastidiosa (strain 9a5c).